The following is an 81-amino-acid chain: Large ribosomal subunit protein bL31B (81 aa).

The protein belongs to the bacterial ribosomal protein bL31 family. Type B subfamily. Part of the 50S ribosomal subunit.

In Pediococcus pentosaceus (strain ATCC 25745 / CCUG 21536 / LMG 10740 / 183-1w), this protein is Large ribosomal subunit protein bL31B.